A 142-amino-acid chain; its full sequence is Hemoglobin subunit alpha (142 aa).

The Globin domain maps to 2–142 (VLSPADKTNV…VSTVLTSKYR (141 aa)). Ser-4 carries the phosphoserine modification. Lys-8 carries the N6-succinyllysine modification. Thr-9 bears the Phosphothreonine mark. Position 12 is an N6-succinyllysine (Lys-12). N6-acetyllysine; alternate is present on Lys-17. Lys-17 bears the N6-succinyllysine; alternate mark. At Tyr-25 the chain carries Phosphotyrosine. Residue Ser-36 is modified to Phosphoserine. Lys-41 carries the post-translational modification N6-succinyllysine. Ser-50 bears the Phosphoserine mark. Residue His-59 coordinates O2. Position 88 (His-88) interacts with heme b. Phosphoserine is present on Ser-103. Thr-109 is subject to Phosphothreonine. Phosphoserine occurs at positions 125 and 132. Phosphothreonine is present on residues Thr-135 and Thr-138. Position 139 is a phosphoserine (Ser-139).

The protein belongs to the globin family. In terms of assembly, heterotetramer of two alpha chains and two beta chains. In terms of tissue distribution, red blood cells.

Involved in oxygen transport from the lung to the various peripheral tissues. Functionally, hemopressin acts as an antagonist peptide of the cannabinoid receptor CNR1. Hemopressin-binding efficiently blocks cannabinoid receptor CNR1 and subsequent signaling. This chain is Hemoglobin subunit alpha (HBA), found in Sapajus apella (Brown-capped capuchin).